The chain runs to 260 residues: Triosephosphate isomerase (260 aa).

11-13 (NWK) provides a ligand contact to substrate. His-103 acts as the Electrophile in catalysis. Catalysis depends on Glu-175, which acts as the Proton acceptor. Substrate-binding positions include Gly-181, Ser-220, and 241–242 (GG).

It belongs to the triosephosphate isomerase family. Homodimer.

Its subcellular location is the cytoplasm. It catalyses the reaction D-glyceraldehyde 3-phosphate = dihydroxyacetone phosphate. It functions in the pathway carbohydrate biosynthesis; gluconeogenesis. The protein operates within carbohydrate degradation; glycolysis; D-glyceraldehyde 3-phosphate from glycerone phosphate: step 1/1. In terms of biological role, involved in the gluconeogenesis. Catalyzes stereospecifically the conversion of dihydroxyacetone phosphate (DHAP) to D-glyceraldehyde-3-phosphate (G3P). The chain is Triosephosphate isomerase from Shewanella sp. (strain MR-4).